Consider the following 758-residue polypeptide: MAILNHTLGFPRVGLRRELKKAQESYWAGNSTQEELLAVGRELRARHWQQQQQAGVDLVPVGDFAWYDHVLTTSLLLGNVPARHQNADGTIDLDTLFRLGRGRAPTGEPAAAAEMTKWFNTNYHYMVPEFHKGQQFKLGWSQLLDEVDEALALGHKIKPVLLGPVTYLWLGKVKGEPFDRLSLLNDILPVYQQVLAELAKRGVEWVQIDEPALVLELPQAWLNAFKPAYDALQGQVKLLLTTYFDSVGHNLDTLRELPVQGLHVDLVGGHDDIAVLNKALPKEWLLSLGVINGRNVWRADLSNWFERLQPLVGSRPLWIGTSCSLLHSPIDLSVETRLDEEVKSWFAFALQKCGELALLSAALNAPGAAKQAELDAYSAPIRARRQSSRVHNAQVGQRLAAITAQDSERQRPYAERAQAQRERFNLPAWPTTTIGSFPQTTEIRGLRLDFKQGRLDGNNYRTSISEHIKQAIVEQERLGLDVLVHGEAERNDMVEYFGENLDGFVFTQNGWVQSYGSRCVKPPVIIGDISRPEAITVEWAKYAQSLTDKPVKGMLTGPVTILCWSFPREDVTREVIAKQIALALRDEVEDLEKAGIGIIQIDEPALREGLPLRQSDWAAYLNWAVDAFKLNAAVAKDDTQIHTHMCYCEFNDIMDSIAALDADVITIETSRSDMDLLEAFKEFEYPNEIGPGVYDIHSPNVPSVEWIEALLRKAAQNIPAERLWVNPDCGLKTRGWPETRQSLANMVLAAQRLREQQA.

5-methyltetrahydropteroyltri-L-glutamate-binding positions include 17 to 20 (RELK) and K117. Residues 434-436 (IGS) and E487 each bind L-homocysteine. Residues 434 to 436 (IGS) and E487 contribute to the L-methionine site. 5-methyltetrahydropteroyltri-L-glutamate is bound by residues 518–519 (RC) and W564. D602 is an L-homocysteine binding site. D602 contacts L-methionine. E608 contacts 5-methyltetrahydropteroyltri-L-glutamate. Positions 644, 646, and 668 each coordinate Zn(2+). H697 serves as the catalytic Proton donor. Residue C729 coordinates Zn(2+).

This sequence belongs to the vitamin-B12 independent methionine synthase family. The cofactor is Zn(2+).

It catalyses the reaction 5-methyltetrahydropteroyltri-L-glutamate + L-homocysteine = tetrahydropteroyltri-L-glutamate + L-methionine. It participates in amino-acid biosynthesis; L-methionine biosynthesis via de novo pathway; L-methionine from L-homocysteine (MetE route): step 1/1. Its function is as follows. Catalyzes the transfer of a methyl group from 5-methyltetrahydrofolate to homocysteine resulting in methionine formation. This Serratia proteamaculans (strain 568) protein is 5-methyltetrahydropteroyltriglutamate--homocysteine methyltransferase.